Consider the following 67-residue polypeptide: Protein LITTLE ZIPPER 3 (67 aa).

Residues 14-59 (YIMKENERLRKKAELLNQENQQLLFQLKQKLSKTKNSNNGSNNDNK) adopt a coiled-coil conformation. Residues 42 to 67 (QKLSKTKNSNNGSNNDNKSSSASGQS) form a disordered region.

As to quaternary structure, interacts with REV. Interacts with ATBH-8, ATBH-9, ATB-14 and ATB-15. As to expression, expressed in the adaxial epidermis of the cotyledons and leaves, and in the vascular cylinder of wild-type torpedo stage embryos. Confined in the central zone and the organizing center in the shoot apical meristem.

Its subcellular location is the nucleus. Its function is as follows. Competitive inhibitor of the HD-ZIPIII transcription factors in shoot apical meristem (SAM) development. Acts by forming non-functional heterodimers. Part of a negative feedback loop. Involved in SAM development and lateral organ patterning. Essential for proper functioning of stem cells in the SAM. This is Protein LITTLE ZIPPER 3 from Arabidopsis thaliana (Mouse-ear cress).